A 181-amino-acid chain; its full sequence is Putative D-tyrosyl-tRNA(Tyr) deacylase 2 (181 aa).

Belongs to the DTD family. Highly divergent. As to quaternary structure, homodimer.

The protein localises to the cytoplasm. Functionally, may hydrolyze D-tyrosyl-tRNA(Tyr) into D-tyrosine and free tRNA(Tyr). Could be a defense mechanism against a harmful effect of D-tyrosine. The protein is Putative D-tyrosyl-tRNA(Tyr) deacylase 2 of Leishmania major.